The chain runs to 87 residues: MVSQLFEEKAKAVNELPTKPSTDELLELYALYKQATVGDNDKEKPGIFNMKDRYKWEAWENLKGKSQEDAEKEYIALVDQLIAKYSS.

The 86-residue stretch at 2 to 87 (VSQLFEEKAK…VDQLIAKYSS (86 aa)) folds into the ACB domain. Residues 29-33 (YALYK), K51, and K55 contribute to the an acyl-CoA site. A Glycyl lysine isopeptide (Lys-Gly) (interchain with G-Cter in ubiquitin) cross-link involves residue K51. K72 is covalently cross-linked (Glycyl lysine isopeptide (Lys-Gly) (interchain with G-Cter in ubiquitin)). Y74 provides a ligand contact to an acyl-CoA.

The protein belongs to the ACBP family.

Its function is as follows. Binds medium- and long-chain acyl-CoA esters with very high affinity and may function as an intracellular carrier of acyl-CoA esters. Enhances the in vitro activity of the ceramide synthase complex. The chain is Acyl-CoA-binding protein (ACB1) from Saccharomyces cerevisiae (strain ATCC 204508 / S288c) (Baker's yeast).